Reading from the N-terminus, the 375-residue chain is uncharacterized protein (375 aa).

At 1–2 the chain is on the cytoplasmic side; it reads MR. A helical; Signal-anchor for type II membrane protein membrane pass occupies residues 3-23; the sequence is WYSYVIPAVILSIIAISGVWW. At 24–375 the chain is on the lumenal side; the sequence is NATLGTRLDQ…YIEQRLFPQP (352 aa).

The protein belongs to the glycosyltransferase 34 family.

The protein localises to the endoplasmic reticulum membrane. It localises to the golgi apparatus membrane. This is an uncharacterized protein from Schizosaccharomyces pombe (strain 972 / ATCC 24843) (Fission yeast).